Reading from the N-terminus, the 474-residue chain is Glycogen synthase (474 aa).

Position 15 (Lys15) interacts with ADP-alpha-D-glucose.

The protein belongs to the glycosyltransferase 1 family. Bacterial/plant glycogen synthase subfamily.

The enzyme catalyses [(1-&gt;4)-alpha-D-glucosyl](n) + ADP-alpha-D-glucose = [(1-&gt;4)-alpha-D-glucosyl](n+1) + ADP + H(+). The protein operates within glycan biosynthesis; glycogen biosynthesis. Its function is as follows. Synthesizes alpha-1,4-glucan chains using ADP-glucose. This chain is Glycogen synthase, found in Chlamydia trachomatis serovar L2b (strain UCH-1/proctitis).